The chain runs to 128 residues: Holo-[acyl-carrier-protein] synthase (128 aa).

2 residues coordinate Mg(2+): aspartate 8 and glutamate 60.

The protein belongs to the P-Pant transferase superfamily. AcpS family. It depends on Mg(2+) as a cofactor.

Its subcellular location is the cytoplasm. The catalysed reaction is apo-[ACP] + CoA = holo-[ACP] + adenosine 3',5'-bisphosphate + H(+). Functionally, transfers the 4'-phosphopantetheine moiety from coenzyme A to a Ser of acyl-carrier-protein. The polypeptide is Holo-[acyl-carrier-protein] synthase (Anaeromyxobacter dehalogenans (strain 2CP-1 / ATCC BAA-258)).